The primary structure comprises 324 residues: Lignin-forming anionic peroxidase (324 aa).

An N-terminal signal peptide occupies residues 1–22; sequence MSFLRFVGAILFLVAIFGASNA. Gln23 is subject to Pyrrolidone carboxylic acid. 4 disulfide bridges follow: Cys33–Cys111, Cys66–Cys71, Cys117–Cys320, and Cys196–Cys228. Asn35 is a glycosylation site (N-linked (GlcNAc...) asparagine). The active-site Proton acceptor is His64. Ca(2+) is bound by residues Asp65, Val68, Gly70, Asp72, and Ser74. N-linked (GlcNAc...) asparagine glycosylation occurs at Asn150. Pro159 contributes to the substrate binding site. His189 serves as a coordination point for heme b. Thr190 is a binding site for Ca(2+). The N-linked (GlcNAc...) asparagine glycan is linked to Asn207. Ca(2+)-binding residues include Asp242, Thr245, and Asp250.

Belongs to the peroxidase family. Classical plant (class III) peroxidase subfamily. Ca(2+) is required as a cofactor. Heme b serves as cofactor.

It is found in the secreted. The catalysed reaction is 2 a phenolic donor + H2O2 = 2 a phenolic radical donor + 2 H2O. In terms of biological role, removal of H(2)O(2), oxidation of toxic reductants, biosynthesis and degradation of lignin, suberization, auxin catabolism, response to environmental stresses such as wounding, pathogen attack and oxidative stress. These functions might be dependent on each isozyme/isoform in each plant tissue. Functionally, plays an integral role in secondary cell wall biosynthesis by the polymerization of cinnamyl alcohols into lignin and by forming rigid cross-links between cellulose, pectin, hydroxy-proline-rich glycoproteins, and lignin. This is Lignin-forming anionic peroxidase from Nicotiana tabacum (Common tobacco).